The following is a 27-amino-acid chain: Histone H1.3, embryonic (27 aa).

The H15 domain occupies 1-27 (HVVAAITALKERGGSSHQALKKYKAAN).

The protein belongs to the histone H1/H5 family.

The protein resides in the nucleus. The protein localises to the chromosome. Histones H1 are necessary for the condensation of nucleosome chains into higher-order structures. This Parechinus angulosus (Angulate sea urchin) protein is Histone H1.3, embryonic.